A 404-amino-acid chain; its full sequence is Lissencephaly-1 homolog (404 aa).

The LisH domain occupies 7-39 (QKEEINRAIAEYMQNNGYSESFSVFLKESSLSE). Residues 54 to 81 (TTVLRLQRKVNDLESKLQESQREINHGA) are a coiled coil. Positions 69–89 (KLQESQREINHGAPTRDKRQA) are enriched in basic and acidic residues. The segment at 69-90 (KLQESQREINHGAPTRDKRQAA) is disordered. 7 WD repeats span residues 104–145 (GHRL…RTLK), 146–185 (GHTD…DCLK), 189–228 (GHEH…CVYT), 231–270 (GHND…AKLV), 273–327 (DHEH…VLFT), 330–369 (AHEN…CMKA), and 372–404 (AHEH…WECR).

Belongs to the WD repeat LIS1/nudF family. As to quaternary structure, component of a dynein-regulating complex composed of at least lis-1 and nud-2. Interacts with nud-2; the interaction is direct. As to expression, expressed in all classes of neurons in the ventral cord. Expressed in the multinucleate spermathecal valves and adult seam cells.

It localises to the cytoplasm. It is found in the cytoskeleton. The protein resides in the microtubule organizing center. Its subcellular location is the centrosome. The protein localises to the chromosome. It localises to the centromere. It is found in the kinetochore. The protein resides in the nucleus envelope. Its function is as follows. Positively regulates the activity of the minus-end directed microtubule motor protein dynein. May enhance dynein-mediated microtubule sliding by targeting dynein to the microtubule plus end. Required for several dynein- and microtubule-dependent processes such as nuclear migration during cell division. Part of a complex with nud-2, which is recruited to the nuclear envelope by unc-83, where, in turn, it recruits dynein to the nuclear surface and regulates nuclear migration in hypodermal precursor cells. Plays a role in GABAergic synaptic vesicle localization in the ventral nerve cord. Required for neuronal cell differentiation. In Caenorhabditis elegans, this protein is Lissencephaly-1 homolog.